Consider the following 64-residue polypeptide: Large ribosomal subunit protein bL35 (64 aa).

The disordered stretch occupies residues M27–A47. The segment covering K36–H45 has biased composition (basic residues).

This sequence belongs to the bacterial ribosomal protein bL35 family.

The chain is Large ribosomal subunit protein bL35 from Chlorobium phaeobacteroides (strain DSM 266 / SMG 266 / 2430).